Consider the following 353-residue polypeptide: UPF0283 membrane protein YcjF (353 aa).

A compositionally biased stretch (basic and acidic residues) spans 1-19; that stretch reads MSEPLKPRIDFAEPLKEEP. The tract at residues 1 to 35 is disordered; sequence MSEPLKPRIDFAEPLKEEPTSAFKAQQTFSEAESR. The next 3 helical transmembrane spans lie at 70 to 90, 100 to 120, and 213 to 233; these read MVMGGLALFGASVVGQGVQWT, VALGGCAAGALIIGAGVGSVV, and ESTLMIAVSSLALVDMAFIAW.

This sequence belongs to the UPF0283 family.

It localises to the cell inner membrane. In Salmonella enteritidis PT4 (strain P125109), this protein is UPF0283 membrane protein YcjF.